The sequence spans 213 residues: ATP-dependent dethiobiotin synthetase BioD (213 aa).

13 to 18 (GIGKTV) lines the ATP pocket. Mg(2+) is bound at residue T17. Residue K33 is part of the active site. Residue E100 coordinates Mg(2+). Residues 100-103 (EGAG) and 184-186 (PRL) contribute to the ATP site.

The protein belongs to the dethiobiotin synthetase family. Homodimer. The cofactor is Mg(2+).

The protein localises to the cytoplasm. It catalyses the reaction (7R,8S)-7,8-diammoniononanoate + CO2 + ATP = (4R,5S)-dethiobiotin + ADP + phosphate + 3 H(+). Its pathway is cofactor biosynthesis; biotin biosynthesis; biotin from 7,8-diaminononanoate: step 1/2. Functionally, catalyzes a mechanistically unusual reaction, the ATP-dependent insertion of CO2 between the N7 and N8 nitrogen atoms of 7,8-diaminopelargonic acid (DAPA, also called 7,8-diammoniononanoate) to form a ureido ring. This chain is ATP-dependent dethiobiotin synthetase BioD, found in Rhodopseudomonas palustris (strain HaA2).